The sequence spans 190 residues: Nodulation protein L (190 aa).

This sequence belongs to the transferase hexapeptide repeat family.

In terms of biological role, acetyltransferase implicated in the O-acetylation of Nod factors. The polypeptide is Nodulation protein L (nodL) (Rhizobium leguminosarum bv. viciae).